A 189-amino-acid chain; its full sequence is GTP cyclohydrolase 1 (189 aa).

Zn(2+)-binding residues include C80, H83, and C152.

This sequence belongs to the GTP cyclohydrolase I family. As to quaternary structure, toroid-shaped homodecamer, composed of two pentamers of five dimers.

The enzyme catalyses GTP + H2O = 7,8-dihydroneopterin 3'-triphosphate + formate + H(+). It functions in the pathway cofactor biosynthesis; 7,8-dihydroneopterin triphosphate biosynthesis; 7,8-dihydroneopterin triphosphate from GTP: step 1/1. The protein is GTP cyclohydrolase 1 of Latilactobacillus sakei subsp. sakei (strain 23K) (Lactobacillus sakei subsp. sakei).